The chain runs to 131 residues: Hyastatin (131 aa).

The N-terminal stretch at 1 to 16 (MRVLLILVSLAALAHA) is a signal peptide. 3 disulfide bridges follow: C103–C117, C107–C124, and C118–C125. The residue at position 130 (K130) is a Lysine amide.

As to expression, strongly expressed in hemocytes, with weaker expression in gills and epidermis. Expressed at low levels in hepatopancreas.

It is found in the cytoplasmic granule. Functionally, antimicrobial peptide. Has strong antibacterial activity against the Gram-positive bacterium C.glutamicum (MIC=0.4 uM) and the Gram-negative bacterium E.coli (MIC=12.5 uM). Has weak antibacterial activity against the Gram-positive bacterium S.aureus (MIC&gt;50 uM) and the Gram-negative bacterium P.aeruginosa (MIC&gt;50 uM). Has antifungal activity against S.cerevisiae (MIC=12.5) and C.albicans (MIC=6.3 uM). Has weak antifungal activity against the mold B.cinerea. Presents chitin-binding activity. The chain is Hyastatin from Hyas araneus (Atlantic lyre crab).